The following is a 383-amino-acid chain: Probable sphingolipid long chain base-responsive protein pil2 (383 aa).

Position 162 is a phosphoserine (Ser162). Disordered regions lie at residues 292-336 and 356-383; these read PRTD…EDYQ and GEED…PIAA. The segment covering 311–324 has biased composition (low complexity); the sequence is TTSGTTHSYTSTGS. 2 stretches are compositionally biased toward polar residues: residues 325–336 and 368–383; these read KRYSQMGTEDYQ and VAET…PIAA.

In terms of processing, phosphorylated by ksg1 and ppk21. Phosphorylation is regulated by sphingolipid long chain bases (LCBs).

Its function is as follows. Negative regulator of cell wall integrity (CWI) in unstressed cells, probably by inhibiting protein kinase ksg1/ppk21 activity and regulating their downstream CWI pathways pck2-MAP kinase pathway and protein kinase gad8 pathway. Activity may be regulated by the transient increase of sphingolipid long chain bases (LCBs) during heat stress. The sequence is that of Probable sphingolipid long chain base-responsive protein pil2 (pil2) from Schizosaccharomyces pombe (strain 972 / ATCC 24843) (Fission yeast).